Here is an 89-residue protein sequence, read N- to C-terminus: MANSAQARKRARQADGQRSHNASLRSTLRTAIKRVRQAIEAGDKAAAQGVFQQSVAVLDRIADKKIVHKNKASRTKSRLSAQIKALAAA.

Positions methionine 1–serine 26 are disordered.

Belongs to the bacterial ribosomal protein bS20 family.

Functionally, binds directly to 16S ribosomal RNA. The chain is Small ribosomal subunit protein bS20 from Dechloromonas aromatica (strain RCB).